The following is a 366-amino-acid chain: tRNA/tmRNA (uracil-C(5))-methyltransferase (366 aa).

The S-adenosyl-L-methionine site is built by Gln190, Tyr218, Asn223, Glu239, and Asp299. The Nucleophile role is filled by Cys324. Residue Glu358 is the Proton acceptor of the active site.

It belongs to the class I-like SAM-binding methyltransferase superfamily. RNA M5U methyltransferase family. TrmA subfamily.

It catalyses the reaction uridine(54) in tRNA + S-adenosyl-L-methionine = 5-methyluridine(54) in tRNA + S-adenosyl-L-homocysteine + H(+). The enzyme catalyses uridine(341) in tmRNA + S-adenosyl-L-methionine = 5-methyluridine(341) in tmRNA + S-adenosyl-L-homocysteine + H(+). In terms of biological role, dual-specificity methyltransferase that catalyzes the formation of 5-methyluridine at position 54 (m5U54) in all tRNAs, and that of position 341 (m5U341) in tmRNA (transfer-mRNA). In Salmonella paratyphi B (strain ATCC BAA-1250 / SPB7), this protein is tRNA/tmRNA (uracil-C(5))-methyltransferase.